A 209-amino-acid polypeptide reads, in one-letter code: Rac-like GTP-binding protein ARAC9 (209 aa).

25-32 (GDGAVGKT) is a binding site for GTP. The Effector region motif lies at 47–55 (YVPTVFDNF). Residues 72-76 (DTAGQ) and 130-133 (TKSD) each bind GTP. A Cysteine methyl ester modification is found at Cys206. A lipid anchor (S-geranylgeranyl cysteine) is attached at Cys206. Positions 207–209 (HVL) are cleaved as a propeptide — removed in mature form.

Belongs to the small GTPase superfamily. Rho family. In terms of assembly, interacts with SPK1.

The protein resides in the cytoplasm. The protein localises to the membrane. In terms of biological role, inactive GDP-bound Rho GTPases reside in the cytosol, are found in a complex with Rho GDP-dissociation inhibitors (Rho GDIs), and are released from the GDI protein in order to translocate to membranes upon activation. The chain is Rac-like GTP-binding protein ARAC9 (ARAC9) from Arabidopsis thaliana (Mouse-ear cress).